Reading from the N-terminus, the 243-residue chain is MKQIVLDENCLAGNFIIVKDAKIYHHLVNVRRLKKGDKLNILLKDKELRASEIVKIGSNFIKFTTNKIDKIEKNNFEISIFISSLKGRKIDLVLRQVVEIGVSEINIINADRSVSKIDINNASAKILRFSKIIDEALKQSGNKIVPKINFYNNFFYLPYSFCTTRYYVAHPSGMILSKNESFDNFGKIGIIIGPEGCFSESEIVFFKEKGFNFVRFNTPILRADTAIIYSLAYFKALLEDYNG.

It belongs to the RNA methyltransferase RsmE family.

Its subcellular location is the cytoplasm. The enzyme catalyses uridine(1498) in 16S rRNA + S-adenosyl-L-methionine = N(3)-methyluridine(1498) in 16S rRNA + S-adenosyl-L-homocysteine + H(+). Specifically methylates the N3 position of the uracil ring of uridine 1498 (m3U1498) in 16S rRNA. Acts on the fully assembled 30S ribosomal subunit. The polypeptide is Ribosomal RNA small subunit methyltransferase E 2 (rsmE2) (Borreliella burgdorferi (strain ATCC 35210 / DSM 4680 / CIP 102532 / B31) (Borrelia burgdorferi)).